The chain runs to 73 residues: Omega-conotoxin CVID (73 aa).

The signal sequence occupies residues 1 to 22; that stretch reads MKLTCVVIVAVLLLTACQLITA. A propeptide spanning residues 23 to 45 is cleaved from the precursor; it reads DDSRGTQKHRALRSDTKLSMSTR. Cystine bridges form between cysteine 46/cysteine 61, cysteine 53/cysteine 65, and cysteine 60/cysteine 72. Cysteine 72 carries the cysteine amide modification.

Belongs to the conotoxin O1 superfamily. In terms of tissue distribution, expressed by the venom duct.

It is found in the secreted. Functionally, omega-conotoxins act at presynaptic membranes, they bind and block voltage-gated calcium channels. This toxin inhibits neurotransmitter release, it blocks N-type calcium channels, probably a N-type (Cav2.2/CACNA1B) calcium channel variant. The protein is Omega-conotoxin CVID of Conus catus (Cat cone).